The following is a 468-amino-acid chain: ATP synthase subunit beta (468 aa).

155–162 provides a ligand contact to ATP; sequence GGAGVGKT.

It belongs to the ATPase alpha/beta chains family. As to quaternary structure, F-type ATPases have 2 components, CF(1) - the catalytic core - and CF(0) - the membrane proton channel. CF(1) has five subunits: alpha(3), beta(3), gamma(1), delta(1), epsilon(1). CF(0) has three main subunits: a(1), b(2) and c(9-12). The alpha and beta chains form an alternating ring which encloses part of the gamma chain. CF(1) is attached to CF(0) by a central stalk formed by the gamma and epsilon chains, while a peripheral stalk is formed by the delta and b chains.

Its subcellular location is the cell membrane. The catalysed reaction is ATP + H2O + 4 H(+)(in) = ADP + phosphate + 5 H(+)(out). Its function is as follows. Produces ATP from ADP in the presence of a proton gradient across the membrane. The catalytic sites are hosted primarily by the beta subunits. The polypeptide is ATP synthase subunit beta (Streptococcus pneumoniae (strain ATCC BAA-255 / R6)).